The primary structure comprises 321 residues: Probable arabinan endo-1,5-alpha-L-arabinosidase A (321 aa).

Residues 1–19 form the signal peptide; the sequence is MYRLLSVASVPLLASLVHG. Asp-34 (proton acceptor) is an active-site residue. Glu-200 (proton donor) is an active-site residue. Asn-295 is a glycosylation site (N-linked (GlcNAc...) asparagine).

It belongs to the glycosyl hydrolase 43 family.

The protein localises to the secreted. The catalysed reaction is Endohydrolysis of (1-&gt;5)-alpha-arabinofuranosidic linkages in (1-&gt;5)-arabinans.. It functions in the pathway glycan metabolism; L-arabinan degradation. Endo-1,5-alpha-L-arabinanase involved in degradation of pectin. Its preferred substrate is linear 1,5-alpha-L-arabinan. The polypeptide is Probable arabinan endo-1,5-alpha-L-arabinosidase A (abnA) (Aspergillus niger (strain ATCC MYA-4892 / CBS 513.88 / FGSC A1513)).